Reading from the N-terminus, the 129-residue chain is Histone H2A (129 aa).

It belongs to the histone H2A family. In terms of assembly, the nucleosome is a histone octamer containing two molecules each of H2A, H2B, H3 and H4 assembled in one H3-H4 heterotetramer and two H2A-H2B heterodimers. The octamer wraps approximately 147 bp of DNA.

It localises to the nucleus. The protein resides in the chromosome. Its function is as follows. Core component of nucleosome. Nucleosomes wrap and compact DNA into chromatin, limiting DNA accessibility to the cellular machineries which require DNA as a template. Histones thereby play a central role in transcription regulation, DNA repair, DNA replication and chromosomal stability. DNA accessibility is regulated via a complex set of post-translational modifications of histones, also called histone code, and nucleosome remodeling. This Chlamydomonas reinhardtii (Chlamydomonas smithii) protein is Histone H2A (H2A-II).